The primary structure comprises 538 residues: MDRAKFIFVTGGVLSSLGKGISSSSIATLLQHCNYQVSILKIDPYINIDPGTMSPLEHGEVFVTSDGAETDLDIGHYERFLNRNLTRLNNFTTGQIFSSVIENERKGEYLGKTIQIVPHVTDEIKRRIKSAAKGLDFLIVEVGGTVGDMEGMFYLEAIRQLKLELGNEKVINVHVTLIPYIQTTNELKTKPTQHSVQELRRLGVTPQIILARSPKPLDKELKNKIALSCDVEQDSVIVATDTKSIYACPILFLQEGILTPIARRFNLNKLHPKMAAWNTLVEKIIAPKHKVKIGFVGKYLSLKESYKSLIEALIHAGAHLDAQVNIEWLDSENFNEKTDLEGVDAILVPGGFGERGIEGKICAIQRARLEKLPFLGICLGMQLAIVEFCRNVLGLKGANSTEFNQRCEYPVVYLIGDFMDQNHQKQVRTYNSPLGGTMRLGEYECEIMPNSLLEKAYKKPSIKERHRHRYEINPKYRQEWESKGLKVVGFGANHLIEAIELEDHPFFVGVQFHPEFTSRLQSPNPIILDFIKSALSKS.

An amidoligase domain region spans residues 1–267 (MDRAKFIFVT…LTPIARRFNL (267 aa)). S15 serves as a coordination point for CTP. S15 lines the UTP pocket. ATP is bound by residues 16-21 (SLGKGI) and D73. Positions 73 and 141 each coordinate Mg(2+). CTP is bound by residues 148–150 (DME), 188–193 (KTKPTQ), and K224. UTP is bound by residues 188–193 (KTKPTQ) and K224. Residues 292–538 (KIGFVGKYLS…DFIKSALSKS (247 aa)) enclose the Glutamine amidotransferase type-1 domain. G351 contacts L-glutamine. Residue C378 is the Nucleophile; for glutamine hydrolysis of the active site. Residues 379 to 382 (LGMQ), E402, and R469 each bind L-glutamine. Catalysis depends on residues H513 and E515.

It belongs to the CTP synthase family. As to quaternary structure, homotetramer.

The enzyme catalyses UTP + L-glutamine + ATP + H2O = CTP + L-glutamate + ADP + phosphate + 2 H(+). The catalysed reaction is L-glutamine + H2O = L-glutamate + NH4(+). It carries out the reaction UTP + NH4(+) + ATP = CTP + ADP + phosphate + 2 H(+). It functions in the pathway pyrimidine metabolism; CTP biosynthesis via de novo pathway; CTP from UDP: step 2/2. With respect to regulation, allosterically activated by GTP, when glutamine is the substrate; GTP has no effect on the reaction when ammonia is the substrate. The allosteric effector GTP functions by stabilizing the protein conformation that binds the tetrahedral intermediate(s) formed during glutamine hydrolysis. Inhibited by the product CTP, via allosteric rather than competitive inhibition. Functionally, catalyzes the ATP-dependent amination of UTP to CTP with either L-glutamine or ammonia as the source of nitrogen. Regulates intracellular CTP levels through interactions with the four ribonucleotide triphosphates. The sequence is that of CTP synthase from Helicobacter pylori (strain HPAG1).